The primary structure comprises 504 residues: D-alanine--D-alanyl carrier protein ligase (504 aa).

152–153 (TS) contributes to the ATP binding site. Position 197 (Asp-197) interacts with D-alanine. 292-297 (NTYGPT) is an ATP binding site. Position 301 (Val-301) interacts with D-alanine. Residues Asp-383, 394-397 (YNGR), and Lys-492 each bind ATP. Residue Lys-492 participates in D-alanine binding.

The protein belongs to the ATP-dependent AMP-binding enzyme family. DltA subfamily.

The protein resides in the cytoplasm. It carries out the reaction holo-[D-alanyl-carrier protein] + D-alanine + ATP = D-alanyl-[D-alanyl-carrier protein] + AMP + diphosphate. The protein operates within cell wall biogenesis; lipoteichoic acid biosynthesis. Its function is as follows. Catalyzes the first step in the D-alanylation of lipoteichoic acid (LTA), the activation of D-alanine and its transfer onto the D-alanyl carrier protein (Dcp) DltC. In an ATP-dependent two-step reaction, forms a high energy D-alanyl-AMP intermediate, followed by transfer of the D-alanyl residue as a thiol ester to the phosphopantheinyl prosthetic group of the Dcp. D-alanylation of LTA plays an important role in modulating the properties of the cell wall in Gram-positive bacteria, influencing the net charge of the cell wall. In Bacillus cereus (strain Q1), this protein is D-alanine--D-alanyl carrier protein ligase.